Here is a 73-residue protein sequence, read N- to C-terminus: UPF0352 protein APJL_0577 (73 aa).

The protein belongs to the UPF0352 family.

The polypeptide is UPF0352 protein APJL_0577 (Actinobacillus pleuropneumoniae serotype 3 (strain JL03)).